The chain runs to 283 residues: Bis(5'-nucleosyl)-tetraphosphatase, symmetrical (283 aa).

Belongs to the Ap4A hydrolase family.

The enzyme catalyses P(1),P(4)-bis(5'-adenosyl) tetraphosphate + H2O = 2 ADP + 2 H(+). Hydrolyzes diadenosine 5',5'''-P1,P4-tetraphosphate to yield ADP. This is Bis(5'-nucleosyl)-tetraphosphatase, symmetrical from Serratia proteamaculans (strain 568).